Here is a 598-residue protein sequence, read N- to C-terminus: Arginine--tRNA ligase (598 aa).

The short motif at 135–145 is the 'HIGH' region element; sequence ANPTGPIHIGG. The disordered stretch occupies residues 229-248; that stretch reads VDGGTDEKGEPLGEGDSEQR. The span at 231-248 shows a compositional bias: basic and acidic residues; sequence GGTDEKGEPLGEGDSEQR.

This sequence belongs to the class-I aminoacyl-tRNA synthetase family. In terms of assembly, monomer.

The protein localises to the cytoplasm. It carries out the reaction tRNA(Arg) + L-arginine + ATP = L-arginyl-tRNA(Arg) + AMP + diphosphate. This Bifidobacterium animalis subsp. lactis (strain AD011) protein is Arginine--tRNA ligase.